A 164-amino-acid polypeptide reads, in one-letter code: IQ domain-containing protein F2 (164 aa).

IQ domains are found at residues 43–72 and 99–128; these read RTKAAVKIQAWWRGTLVRRTLLHAALRAWI and RERAVIKLQSLVRMWRVRWRYCQVLNAIYI.

The sequence is that of IQ domain-containing protein F2 (IQCF2) from Homo sapiens (Human).